The chain runs to 272 residues: Acetylglutamate kinase (272 aa).

Residues 46–47 (GA), Arg68, and Asn166 each bind substrate.

It belongs to the acetylglutamate kinase family. ArgB subfamily.

The protein localises to the cytoplasm. The enzyme catalyses N-acetyl-L-glutamate + ATP = N-acetyl-L-glutamyl 5-phosphate + ADP. It functions in the pathway amino-acid biosynthesis; L-arginine biosynthesis; N(2)-acetyl-L-ornithine from L-glutamate: step 2/4. Functionally, catalyzes the ATP-dependent phosphorylation of N-acetyl-L-glutamate. In Dehalococcoides mccartyi (strain ATCC BAA-2266 / KCTC 15142 / 195) (Dehalococcoides ethenogenes (strain 195)), this protein is Acetylglutamate kinase.